Reading from the N-terminus, the 270-residue chain is Glucan endo-1,3-beta-glucosidase (270 aa).

The first 18 residues, 1–18 (MNAFTFPLLLAFCAFAHG), serve as a signal peptide directing secretion. Residues 22–270 (LDWEDEFNGG…VEYVKKWTWN (249 aa)) enclose the GH16 domain. The active-site Nucleophile is the Glu137. Glu142 (proton donor) is an active-site residue.

Belongs to the glycosyl hydrolase 16 family.

Its subcellular location is the secreted. It carries out the reaction Hydrolysis of (1-&gt;3)-beta-D-glucosidic linkages in (1-&gt;3)-beta-D-glucans.. Its activity is regulated as follows. Ca(2+) does not affect the enzyme activity nor the thermostability. Other cations, such as Mg(2+), Mn(2+), Cu(2+), Zn(2+), Ag(+) or Hg(2+) do not cause any serious adverse effect on the activity. Also no significant change in the activity in response to the addition of 1 mM EDTA. Functionally, hydrolyzes laminarin majorily to glucose (G1), laminaribiose (L2), laminaritriose (L3), laminaritetraose (L4) and laminaripentaose (L5). Hydrolyzes laminarioligosaccharides L3, L4, L5 and laminarihexaose (L6) to G1, L2 and L3. Hardly hydrolyzes L2. Does not hydrolyze lichenan, pustulan, carboxymethyl cellulose, locust bean gum or soluble starch. In Cryptopygus antarcticus (Antarctic springtail), this protein is Glucan endo-1,3-beta-glucosidase.